We begin with the raw amino-acid sequence, 188 residues long: Elongation factor P (188 aa).

It belongs to the elongation factor P family.

The protein resides in the cytoplasm. It participates in protein biosynthesis; polypeptide chain elongation. Its function is as follows. Involved in peptide bond synthesis. Stimulates efficient translation and peptide-bond synthesis on native or reconstituted 70S ribosomes in vitro. Probably functions indirectly by altering the affinity of the ribosome for aminoacyl-tRNA, thus increasing their reactivity as acceptors for peptidyl transferase. The polypeptide is Elongation factor P (Mycoplasmoides gallisepticum (strain R(low / passage 15 / clone 2)) (Mycoplasma gallisepticum)).